We begin with the raw amino-acid sequence, 159 residues long: Protein B1 (159 aa).

Residues 1–15 show a composition bias toward basic residues; sequence MQKNMKTKKTKKRGR. 2 disordered regions span residues 1–100 and 133–159; these read MQKN…RTRE and PGHGPHASLRSHLRARSALRPPPDPPR. The span at 16 to 31 shows a compositional bias: basic and acidic residues; the sequence is KEGNTPETERRMEPAR. Basic residues predominate over residues 85–96; that stretch reads RGRHIHTRGART.

This chain is Protein B1 (B1), found in Human herpesvirus 6B (strain Z29) (HHV-6 variant B).